Here is an 887-residue protein sequence, read N- to C-terminus: Translation initiation factor IF-2 (887 aa).

A disordered region spans residues 1–291 (MTDQADTSER…RRRVERERKK (291 aa)). The segment covering 58–117 (AAPAAAPAAAPAAAEEVAKKPVAAPEVKPAAPVEERPAPVAKAAPEVKAVPAPAPAAAPA) has biased composition (low complexity). Composition is skewed to basic and acidic residues over residues 148 to 178 (SARE…EAER), 185 to 194 (AAEEASRHTA), 201 to 215 (RAAE…DDRP), and 267 to 276 (AFDDESERQR). In terms of domain architecture, tr-type G spans 385 to 553 (ARAPVVTVMG…TILLQAELLD (169 aa)). The G1 stretch occupies residues 394–401 (GHVDHGKT). 394–401 (GHVDHGKT) contributes to the GTP binding site. Positions 419 to 423 (GITQH) are G2. Positions 441–444 (DTPG) are G3. Residues 441-445 (DTPGH) and 495-498 (NKMD) each bind GTP. Residues 495 to 498 (NKMD) are G4. A G5 region spans residues 531-533 (SAK).

It belongs to the TRAFAC class translation factor GTPase superfamily. Classic translation factor GTPase family. IF-2 subfamily.

It is found in the cytoplasm. In terms of biological role, one of the essential components for the initiation of protein synthesis. Protects formylmethionyl-tRNA from spontaneous hydrolysis and promotes its binding to the 30S ribosomal subunits. Also involved in the hydrolysis of GTP during the formation of the 70S ribosomal complex. This is Translation initiation factor IF-2 from Parvibaculum lavamentivorans (strain DS-1 / DSM 13023 / NCIMB 13966).